The sequence spans 369 residues: Anhydro-N-acetylmuramic acid kinase (369 aa).

Position 12–19 (12–19) interacts with ATP; that stretch reads GTSMDGVD.

This sequence belongs to the anhydro-N-acetylmuramic acid kinase family.

It carries out the reaction 1,6-anhydro-N-acetyl-beta-muramate + ATP + H2O = N-acetyl-D-muramate 6-phosphate + ADP + H(+). It functions in the pathway amino-sugar metabolism; 1,6-anhydro-N-acetylmuramate degradation. The protein operates within cell wall biogenesis; peptidoglycan recycling. Catalyzes the specific phosphorylation of 1,6-anhydro-N-acetylmuramic acid (anhMurNAc) with the simultaneous cleavage of the 1,6-anhydro ring, generating MurNAc-6-P. Is required for the utilization of anhMurNAc either imported from the medium or derived from its own cell wall murein, and thus plays a role in cell wall recycling. This chain is Anhydro-N-acetylmuramic acid kinase, found in Shewanella amazonensis (strain ATCC BAA-1098 / SB2B).